Reading from the N-terminus, the 222-residue chain is UPF0502 protein Shewmr4_1554 (222 aa).

Positions 175 to 193 (SLSADSPSAGSNSLNAQDR) are enriched in polar residues. A disordered region spans residues 175-194 (SLSADSPSAGSNSLNAQDRQ).

Belongs to the UPF0502 family.

This Shewanella sp. (strain MR-4) protein is UPF0502 protein Shewmr4_1554.